A 416-amino-acid chain; its full sequence is 26S proteasome regulatory subunit 8 (416 aa).

Residues 1–18 (MAPPASTASSADPSKPTA) are compositionally biased toward low complexity. The interval 1-29 (MAPPASTASSADPSKPTAQKLTEESDEKT) is disordered. 200 to 207 (GPPGTGKT) serves as a coordination point for ATP.

The protein belongs to the AAA ATPase family. In terms of assembly, component of the 19S proteasome regulatory particle complex. The 26S proteasome consists of a 20S core particle (CP) and two 19S regulatory subunits (RP). Interacts with elt-2.

The protein localises to the cytoplasm. The protein resides in the nucleus. Component of the 26S proteasome, a multiprotein complex involved in the ATP-dependent degradation of ubiquitinated proteins. This complex plays a key role in the maintenance of protein homeostasis by removing misfolded or damaged proteins, which could impair cellular functions, and by removing proteins whose functions are no longer required. Therefore, the proteasome participates in numerous cellular processes, including cell cycle progression, apoptosis, or DNA damage repair. Belongs to the heterohexameric ring of AAA (ATPases associated with diverse cellular activities) proteins that unfolds ubiquitinated target proteins that are concurrently translocated into a proteolytic chamber and degraded into peptides. In addition, regulates gene expression in response to bacterial infection. Binds to the GATA transcription factor elt-2 to control its transcriptional activity and thus the expression of elt-2-dependent genes in response to infection by Gram-negative bacteria such as P.aeruginosa. The chain is 26S proteasome regulatory subunit 8 from Caenorhabditis elegans.